A 198-amino-acid chain; its full sequence is UPF0312 protein PFL_5802 (198 aa).

Residues 1-23 (MLKKTLAALAIGSAVLAAGQVMA) form the signal peptide.

The protein belongs to the UPF0312 family. Type 1 subfamily.

It localises to the periplasm. The chain is UPF0312 protein PFL_5802 from Pseudomonas fluorescens (strain ATCC BAA-477 / NRRL B-23932 / Pf-5).